Reading from the N-terminus, the 352-residue chain is C-C chemokine receptor type 5 (352 aa).

At 1 to 30 (MDYSMSTALYDIDYGMSEPCQKIDVKQVAA) the chain is on the extracellular side. Tyr3 bears the Sulfotyrosine mark. O-linked (GalNAc...) serine glycosylation is present at Ser6. 2 positions are modified to sulfotyrosine: Tyr10 and Tyr14. The O-linked (GalNAc...) serine glycan is linked to Ser17. Cystine bridges form between Cys20/Cys269 and Cys101/Cys178. The chain crosses the membrane as a helical span at residues 31 to 58 (RLLPPLYSLVFIFGFVGNLLVVLILITC). Topologically, residues 59-68 (KKLKSMTDIY) are cytoplasmic. Residues 69–89 (LLNLAISDLLFLLTLPLWAHY) traverse the membrane as a helical segment. Over 90-102 (AAAEWDFGGAMCK) the chain is Extracellular. The chain crosses the membrane as a helical span at residues 103–124 (VFTGMYHMGYFGGIFFIILLTI). Topologically, residues 125-141 (DRYLAIVHAVFALKART) are cytoplasmic. A helical transmembrane segment spans residues 142-166 (VTFGVVTSGVTWVAAILVSLPDIIF). The Extracellular portion of the chain corresponds to 167-198 (TRSQKEGFRCSCSPHFPASQYQFWKNFHTIMR). The chain crosses the membrane as a helical span at residues 199–218 (NILSLVLPLLVMIVCYSGIL). The Cytoplasmic portion of the chain corresponds to 219–235 (KTLLRCRNEKRRHRAVR). A helical transmembrane segment spans residues 236-260 (LIFAIMVVYFLFWAPYNVVLLLNTF). Over 261-277 (QEFFGLNNCSSSNRLDR) the chain is Extracellular. A helical membrane pass occupies residues 278–301 (AMQVTETLGMTHCCINPVVYAFVG). Residues 302–352 (EKFRSYLSAFFRKHVAKRLCKHCPLLPRETPEPASSVYTRSTGEQEISVGL) lie on the Cytoplasmic side of the membrane. S-palmitoyl cysteine attachment occurs at residues Cys321 and Cys324. Positions 332 to 352 (PEPASSVYTRSTGEQEISVGL) are disordered. Ser336, Ser337, Ser342, and Ser349 each carry phosphoserine; by BARK1. Over residues 337-346 (SVYTRSTGEQ) the composition is skewed to polar residues.

The protein belongs to the G-protein coupled receptor 1 family. In terms of assembly, interacts with PRAF2. Efficient ligand binding to CCL3/MIP-1alpha and CCL4/MIP-1beta requires sulfation, O-glycosylation and sialic acid modifications. Glycosylation on Ser-6 is required for efficient binding of CCL4. Interacts with GRK2. Interacts with ARRB1 and ARRB2. Interacts with CNIH4. Interacts with S100A4; this interaction stimulates T-lymphocyte chemotaxis. Sulfated on at least 2 of the N-terminal tyrosines. Sulfation is required for efficient binding of the chemokines, CCL3 and CCL4. Post-translationally, O-glycosylated, but not N-glycosylated. Ser-6 appears to be the major site. Also sialylated glycans present which contribute to chemokine binding. Ser-17 may also be glycosylated and, if so, with small moieties such as a T-antigen. In terms of processing, palmitoylation in the C-terminal is important for cell surface expression. Phosphorylation on serine residues in the C-terminal is stimulated by binding CC chemokines especially by APO-RANTES.

Its subcellular location is the cell membrane. Receptor for a number of inflammatory CC-chemokines including CCL3/MIP-1-alpha, CCL4/MIP-1-beta and RANTES and subsequently transduces a signal by increasing the intracellular calcium ion level. May play a role in the control of granulocytic lineage proliferation or differentiation. Participates in T-lymphocyte migration to the infection site by acting as a chemotactic receptor. This Oryctolagus cuniculus (Rabbit) protein is C-C chemokine receptor type 5 (CCR5).